The chain runs to 727 residues: 1,4-alpha-glucan branching enzyme GlgB (727 aa).

The Nucleophile role is filled by D411. Residue E464 is the Proton donor of the active site.

It belongs to the glycosyl hydrolase 13 family. GlgB subfamily. In terms of assembly, monomer.

The catalysed reaction is Transfers a segment of a (1-&gt;4)-alpha-D-glucan chain to a primary hydroxy group in a similar glucan chain.. It participates in glycan biosynthesis; glycogen biosynthesis. Catalyzes the formation of the alpha-1,6-glucosidic linkages in glycogen by scission of a 1,4-alpha-linked oligosaccharide from growing alpha-1,4-glucan chains and the subsequent attachment of the oligosaccharide to the alpha-1,6 position. The protein is 1,4-alpha-glucan branching enzyme GlgB of Protochlamydia amoebophila (strain UWE25).